We begin with the raw amino-acid sequence, 290 residues long: 4-diphosphocytidyl-2-C-methyl-D-erythritol kinase (290 aa).

Lys11 is a catalytic residue. An ATP-binding site is contributed by 97-107 (PVAAGIGGGSS). Asp139 is a catalytic residue.

It belongs to the GHMP kinase family. IspE subfamily.

The catalysed reaction is 4-CDP-2-C-methyl-D-erythritol + ATP = 4-CDP-2-C-methyl-D-erythritol 2-phosphate + ADP + H(+). The protein operates within isoprenoid biosynthesis; isopentenyl diphosphate biosynthesis via DXP pathway; isopentenyl diphosphate from 1-deoxy-D-xylulose 5-phosphate: step 3/6. Its function is as follows. Catalyzes the phosphorylation of the position 2 hydroxy group of 4-diphosphocytidyl-2C-methyl-D-erythritol. This chain is 4-diphosphocytidyl-2-C-methyl-D-erythritol kinase, found in Methylobacterium radiotolerans (strain ATCC 27329 / DSM 1819 / JCM 2831 / NBRC 15690 / NCIMB 10815 / 0-1).